A 468-amino-acid chain; its full sequence is Eukaryotic translation initiation factor 3 subunit M (468 aa).

The interval 42-61 (PLIEPLRQQEQSEEEPDRKQ) is disordered. The region spanning 206–377 (DLELAQTHVV…SEFLVHRATY (172 aa)) is the PCI domain. Positions 418-468 (MQAAAEETGQGKSGDKGAKGGDRRRNPQQQQQSQPSQPQQAREVELVGGAE) are disordered. The span at 430-442 (SGDKGAKGGDRRR) shows a compositional bias: basic and acidic residues. Residues 444-457 (PQQQQQSQPSQPQQ) show a composition bias toward low complexity.

This sequence belongs to the eIF-3 subunit M family. In terms of assembly, component of the eukaryotic translation initiation factor 3 (eIF-3) complex.

The protein localises to the cytoplasm. Component of the eukaryotic translation initiation factor 3 (eIF-3) complex, which is involved in protein synthesis of a specialized repertoire of mRNAs and, together with other initiation factors, stimulates binding of mRNA and methionyl-tRNAi to the 40S ribosome. The eIF-3 complex specifically targets and initiates translation of a subset of mRNAs involved in cell proliferation. The sequence is that of Eukaryotic translation initiation factor 3 subunit M from Neosartorya fischeri (strain ATCC 1020 / DSM 3700 / CBS 544.65 / FGSC A1164 / JCM 1740 / NRRL 181 / WB 181) (Aspergillus fischerianus).